Here is a 681-residue protein sequence, read N- to C-terminus: Auxin response factor 8 (681 aa).

Residues 120-222 (FAKTLTQSDA…DLHVGIRRAK (103 aa)) constitute a DNA-binding region (TF-B3). Disordered stretches follow at residues 474–518 (LRRP…AKPP) and 534–577 (SLSG…TSSE). 2 stretches are compositionally biased toward polar residues: residues 534-555 (SLSG…NTEK) and 564-577 (GVIQ…TSSE). In terms of domain architecture, PB1 spans 595 to 675 (PGQCKVFIES…RRLTILTDAG (81 aa)).

It belongs to the ARF family. In terms of assembly, homodimers and heterodimers. Expressed in roots, culms, leaves and young panicles.

It localises to the nucleus. Functionally, auxin response factors (ARFs) are transcriptional factors that bind specifically to the DNA sequence 5'-TGTCTC-3' found in the auxin-responsive promoter elements (AuxREs). The polypeptide is Auxin response factor 8 (ARF8) (Oryza sativa subsp. japonica (Rice)).